Here is a 314-residue protein sequence, read N- to C-terminus: Putative steroid dehydrogenase 1 (314 aa).

Residue 47–76 (ASWAVVTGATDGIGKSYSFELAKRGFNVYI) participates in NADP(+) binding. Tyr-202 is an active-site residue.

Belongs to the short-chain dehydrogenases/reductases (SDR) family. 17-beta-HSD 3 subfamily.

The sequence is that of Putative steroid dehydrogenase 1 (stdh-1) from Caenorhabditis elegans.